A 258-amino-acid polypeptide reads, in one-letter code: MIQIDALPAFNDNYIWLLQDATSRRCAVVDPGDAKPVEAWLAAHPDWRLSDILVTHHHHDHVGGVAALKELTGARVLGPANEKIPARDLALEDGERVEVLGLVFEIFHVPGHTLGHIAYYHPAETPLLFCGDTLFAAGCGRLFEGTPAQMHHSLARLAALPANTRVYCTHEYTLSNLRFALAVEPDNAALRERFEEATRLRERDRITLPSEISLELSTNPFLRVSEKSVKKKADQRSGQQNRTPEEVFAVLRAWKDQF.

Zn(2+)-binding residues include histidine 56, histidine 58, aspartate 60, histidine 61, histidine 112, aspartate 132, and histidine 170.

This sequence belongs to the metallo-beta-lactamase superfamily. Glyoxalase II family. In terms of assembly, monomer. Zn(2+) is required as a cofactor.

The catalysed reaction is an S-(2-hydroxyacyl)glutathione + H2O = a 2-hydroxy carboxylate + glutathione + H(+). Its pathway is secondary metabolite metabolism; methylglyoxal degradation; (R)-lactate from methylglyoxal: step 2/2. Thiolesterase that catalyzes the hydrolysis of S-D-lactoyl-glutathione to form glutathione and D-lactic acid. The protein is Hydroxyacylglutathione hydrolase of Pseudomonas aeruginosa (strain LESB58).